A 273-amino-acid polypeptide reads, in one-letter code: Large ribosomal subunit protein uL2 (273 aa).

Disordered stretches follow at residues 28–55 (TPEK…RHRG) and 222–273 (GMAM…SKRK). Over residues 255–273 (YKTRKKRRVSDRFIVSKRK) the composition is skewed to basic residues.

It belongs to the universal ribosomal protein uL2 family. Part of the 50S ribosomal subunit. Forms a bridge to the 30S subunit in the 70S ribosome.

In terms of biological role, one of the primary rRNA binding proteins. Required for association of the 30S and 50S subunits to form the 70S ribosome, for tRNA binding and peptide bond formation. It has been suggested to have peptidyltransferase activity; this is somewhat controversial. Makes several contacts with the 16S rRNA in the 70S ribosome. This Treponema pallidum (strain Nichols) protein is Large ribosomal subunit protein uL2.